A 587-amino-acid polypeptide reads, in one-letter code: Aspartate--tRNA ligase (587 aa).

L-aspartate is bound at residue E174. An aspartate region spans residues 198–201 (QITK). R220 serves as a coordination point for L-aspartate. Residues 220–222 (RDE) and Q229 each bind ATP. H443 contributes to the L-aspartate binding site. E477 serves as a coordination point for ATP. R484 contacts L-aspartate. An ATP-binding site is contributed by 529 to 532 (GLDR).

The protein belongs to the class-II aminoacyl-tRNA synthetase family. Type 1 subfamily. In terms of assembly, homodimer.

Its subcellular location is the cytoplasm. The enzyme catalyses tRNA(Asp) + L-aspartate + ATP = L-aspartyl-tRNA(Asp) + AMP + diphosphate. Functionally, catalyzes the attachment of L-aspartate to tRNA(Asp) in a two-step reaction: L-aspartate is first activated by ATP to form Asp-AMP and then transferred to the acceptor end of tRNA(Asp). This Streptococcus pneumoniae serotype 19F (strain G54) protein is Aspartate--tRNA ligase.